The chain runs to 527 residues: Nucleus accumbens-associated protein 1 (527 aa).

One can recognise a BTB domain in the interval 30–94; the sequence is CDVSVVVKGH…CYTGRLSMNV (65 aa). The disordered stretch occupies residues 131 to 153; it reads QGLHAEEAPSSEPQSPVAQTSGW. The segment covering 141 to 152 has biased composition (polar residues); the sequence is SEPQSPVAQTSG. Lys-167 is covalently cross-linked (Glycyl lysine isopeptide (Lys-Gly) (interchain with G-Cter in SUMO1); alternate). Lys-167 participates in a covalent cross-link: Glycyl lysine isopeptide (Lys-Gly) (interchain with G-Cter in SUMO2); alternate. Lys-183 is covalently cross-linked (Glycyl lysine isopeptide (Lys-Gly) (interchain with G-Cter in SUMO2)). Ser-188 carries the phosphoserine modification. Residues 210–292 are disordered; it reads DLAANRPHQP…DEEEDGGEEG (83 aa). Low complexity predominate over residues 225–251; sequence APVVAAAQPAVAAGAGQPAGGVAAAGG. A compositionally biased stretch (polar residues) spans 255 to 277; it reads GPSTSERTSPGTSSAYTSDSPGS. Residue Ser-259 is modified to Phosphoserine; by PKC. Residues 281-292 are compositionally biased toward acidic residues; sequence EEDEEEDGGEEG. Glycyl lysine isopeptide (Lys-Gly) (interchain with G-Cter in SUMO2) cross-links involve residues Lys-318, Lys-452, Lys-480, Lys-483, and Lys-498. The region spanning 374–471 is the BEN domain; sequence GTNVYITRAQ…DMCTNARRVV (98 aa).

As to quaternary structure, homooligomer; mediated by the BTB domain. Interacts with HDAC3 and HDAC4. Interacts (via BTB domain) with CUL3, PSMD7 and RCOR1. Overexpressed in several types of carcinomas including ovarian serous carcinomas. Expression levels positively correlate with tumor recurrence in ovarian serous carcinomas, and intense immunoreactivity in primary ovarian tumors predicts early recurrence. Up-regulated in ovarian carcinomas after chemotherapy, suggesting a role in development of chemotherapy resistance in ovarian cancer.

It is found in the nucleus. Its subcellular location is the cytoplasm. Functions as a transcriptional repressor. Seems to function as a transcriptional corepressor in neuronal cells through recruitment of HDAC3 and HDAC4. Contributes to tumor progression, and tumor cell proliferation and survival. This may be mediated at least in part through repressing transcriptional activity of GADD45GIP1. Required for recruiting the proteasome from the nucleus to the cytoplasm and dendritic spines. This is Nucleus accumbens-associated protein 1 (NACC1) from Homo sapiens (Human).